Here is a 260-residue protein sequence, read N- to C-terminus: Fructose import ATP-binding protein FrcA (260 aa).

Residues 7-251 (LTARGLVKRY…DAVAFMTGAK (245 aa)) enclose the ABC transporter domain. 39-46 (GDNGAGKS) contacts ATP.

Belongs to the ABC transporter superfamily. As to quaternary structure, the complex is composed of two ATP-binding proteins (FrcA), two transmembrane proteins (FrcC) and a solute-binding protein (FrcB).

It localises to the cell inner membrane. It carries out the reaction D-fructose(out) + ATP + H2O = D-fructose(in) + ADP + phosphate + H(+). In terms of biological role, part of the high-affinity ABC transporter complex FrcBCA involved in fructose uptake. Is also a high-affinity transporter for ribose and mannose. Responsible for energy coupling to the transport system. The sequence is that of Fructose import ATP-binding protein FrcA from Rhizobium meliloti (Ensifer meliloti).